Here is a 414-residue protein sequence, read N- to C-terminus: Esterase FrsA (414 aa).

It belongs to the FrsA family.

The catalysed reaction is a carboxylic ester + H2O = an alcohol + a carboxylate + H(+). Its function is as follows. Catalyzes the hydrolysis of esters. The polypeptide is Esterase FrsA (Escherichia coli (strain K12 / DH10B)).